We begin with the raw amino-acid sequence, 390 residues long: Phosphopentomutase (390 aa).

Positions 11, 283, 288, 324, 325, and 336 each coordinate Mn(2+).

The protein belongs to the phosphopentomutase family. Mn(2+) is required as a cofactor.

The protein resides in the cytoplasm. It catalyses the reaction 2-deoxy-alpha-D-ribose 1-phosphate = 2-deoxy-D-ribose 5-phosphate. The catalysed reaction is alpha-D-ribose 1-phosphate = D-ribose 5-phosphate. It participates in carbohydrate degradation; 2-deoxy-D-ribose 1-phosphate degradation; D-glyceraldehyde 3-phosphate and acetaldehyde from 2-deoxy-alpha-D-ribose 1-phosphate: step 1/2. Isomerase that catalyzes the conversion of deoxy-ribose 1-phosphate (dRib-1-P) and ribose 1-phosphate (Rib-1-P) to deoxy-ribose 5-phosphate (dRib-5-P) and ribose 5-phosphate (Rib-5-P), respectively. The chain is Phosphopentomutase from Alkaliphilus metalliredigens (strain QYMF).